Here is a 146-residue protein sequence, read N- to C-terminus: FAD synthase (146 aa).

Residues 9–10 (TF), 14–17 (HPGH), and aspartate 92 each bind ATP.

It belongs to the archaeal FAD synthase family. In terms of assembly, homodimer. It depends on a divalent metal cation as a cofactor.

The enzyme catalyses FMN + ATP + H(+) = FAD + diphosphate. Its pathway is cofactor biosynthesis; FAD biosynthesis; FAD from FMN: step 1/1. Its function is as follows. Catalyzes the transfer of the AMP portion of ATP to flavin mononucleotide (FMN) to produce flavin adenine dinucleotide (FAD) coenzyme. This Halobacterium salinarum (strain ATCC 29341 / DSM 671 / R1) protein is FAD synthase.